The sequence spans 535 residues: CTP synthase (535 aa).

The interval 1 to 268 (MPNKYIVVTG…VSKILSRLKL (268 aa)) is amidoligase domain. A CTP-binding site is contributed by Ser14. Position 14 (Ser14) interacts with UTP. 15 to 20 (SVGKGT) serves as a coordination point for ATP. Position 55 (Tyr55) interacts with L-glutamine. ATP is bound at residue Asp72. Residues Asp72 and Glu142 each contribute to the Mg(2+) site. Residues 149 to 151 (DIE), 189 to 194 (KTKPLQ), and Lys225 each bind CTP. Residues 189 to 194 (KTKPLQ) and Lys225 each bind UTP. Val243 is a binding site for ATP. In terms of domain architecture, Glutamine amidotransferase type-1 spans 302-535 (YTKLKDSYIS…LGFIRAVASL (234 aa)). Gly359 contributes to the L-glutamine binding site. Cys386 functions as the Nucleophile; for glutamine hydrolysis in the catalytic mechanism. Residues 387–390 (FGFQ), Glu410, and Arg467 each bind L-glutamine. Residues His511 and Glu513 contribute to the active site.

The protein belongs to the CTP synthase family. Homotetramer in the presence of ATP and UTP. The enzyme dissociates into homodimers in the absence of substrate nucleotides.

The catalysed reaction is UTP + L-glutamine + ATP + H2O = CTP + L-glutamate + ADP + phosphate + 2 H(+). The enzyme catalyses L-glutamine + H2O = L-glutamate + NH4(+). It carries out the reaction UTP + NH4(+) + ATP = CTP + ADP + phosphate + 2 H(+). It functions in the pathway pyrimidine metabolism; CTP biosynthesis via de novo pathway; CTP from UDP: step 2/2. Allosterically activated by GTP, when glutamine is the substrate; GTP has no effect on the reaction when ammonia is the substrate. The allosteric effector GTP functions by stabilizing the protein conformation that binds the tetrahedral intermediate(s) formed during glutamine hydrolysis. Inhibited by the product CTP, via allosteric rather than competitive inhibition. Its function is as follows. Catalyzes the ATP-dependent amination of UTP to CTP with either L-glutamine or ammonia as the source of nitrogen. Regulates intracellular CTP levels through interactions with the four ribonucleotide triphosphates. The polypeptide is CTP synthase (Saccharolobus solfataricus (strain ATCC 35092 / DSM 1617 / JCM 11322 / P2) (Sulfolobus solfataricus)).